Reading from the N-terminus, the 318-residue chain is MIKVVFMGTPDFSVPILKQLIEDGYNIAAVVTQPDKPKGRKRELTPPPVKVEAEKHGIPVLQPTKIREKEQYEQVLAFKPDLIVTAAFGQILPKALLDAPKYGCINVHASLLPELRGGAPIHYAILQGKTKTGVTIMYMVEKLDAGDILTQVEVPITETDTVGTLHDKLSIAGAKLLSETIPQLVAGKLTPIKQDDEKATYAYNIKREQEKIDWTKPGEDIYNHIRGLHPWPVAYTTFAGNVWKVWWGEKVPAPKKAEPGTIIDIVQDGIVVATGNETAIKITELQPAGKKRMNAAQFLRGAGAHLTIGMKLGDEHES.

110–113 (SLLP) is a binding site for (6S)-5,6,7,8-tetrahydrofolate.

This sequence belongs to the Fmt family.

It carries out the reaction L-methionyl-tRNA(fMet) + (6R)-10-formyltetrahydrofolate = N-formyl-L-methionyl-tRNA(fMet) + (6S)-5,6,7,8-tetrahydrofolate + H(+). In terms of biological role, attaches a formyl group to the free amino group of methionyl-tRNA(fMet). The formyl group appears to play a dual role in the initiator identity of N-formylmethionyl-tRNA by promoting its recognition by IF2 and preventing the misappropriation of this tRNA by the elongation apparatus. In Geobacillus sp. (strain WCH70), this protein is Methionyl-tRNA formyltransferase.